The sequence spans 242 residues: N-alpha-acetyltransferase 60 (242 aa).

The Cytoplasmic segment spans residues 1-192; the sequence is MTEVVPSSAL…GGHPPWTILD (192 aa). The N-acetyltransferase domain occupies 13–182; it reads VSLRLLCHDD…DGFTYVLYIN (170 aa). Tyrosine 38 lines the substrate pocket. Residue lysine 79 is modified to N6-acetyllysine; by autocatalysis. Residue tyrosine 97 is part of the active site. Leucine 99 contributes to the substrate binding site. Position 101 to 103 (101 to 103) interacts with acetyl-CoA; it reads LGV. Lysine 105, lysine 109, and lysine 121 each carry N6-acetyllysine; by autocatalysis. 109-114 serves as a coordination point for acetyl-CoA; it reads KHGIGS. The active site involves histidine 138. Residues asparagine 143 and 150-153 each bind acetyl-CoA; that span reads YENR. Lysine 156 is modified (N6-acetyllysine; by autocatalysis). The tract at residues 162–173 is required for homodimerization; that stretch reads PYYYSIRGVLKD. Tyrosine 165 lines the substrate pocket. The segment at residues 193 to 236 is an intramembrane region (helical); it reads YIQHLGSALASLSPCSIPHRVYRQAHSLLCSFLPWSGISSKSGI. Over 237-242 the chain is Cytoplasmic; the sequence is EYSRTM.

This sequence belongs to the acetyltransferase family. NAA60 subfamily. Monomer and homodimer; monomer in presence of substrate and homodimer in its absence. Acetylated: autoacetylation is required for optimal acetyltransferase activity.

It localises to the golgi apparatus membrane. The catalysed reaction is N-terminal L-methionyl-[transmembrane protein] + acetyl-CoA = N-terminal N(alpha)-acetyl-L-methionyl-[transmembrane protein] + CoA + H(+). The enzyme catalyses L-lysyl-[protein] + acetyl-CoA = N(6)-acetyl-L-lysyl-[protein] + CoA + H(+). Functionally, N-alpha-acetyltransferase that specifically mediates the acetylation of N-terminal residues of the transmembrane proteins, with a strong preference for N-termini facing the cytosol. Displays N-terminal acetyltransferase activity towards a range of N-terminal sequences including those starting with Met-Lys, Met-Val, Met-Ala and Met-Met. Required for normal chromosomal segregation during anaphase. May also show histone acetyltransferase activity; such results are however unclear in vivo and would require additional experimental evidences. In Homo sapiens (Human), this protein is N-alpha-acetyltransferase 60.